The chain runs to 3133 residues: Probable polyketide synthase 38 (3133 aa).

The region spanning 9–440 is the Ketosynthase family 3 (KS3) domain; it reads DDDVAVIGIG…GSNVCLILSE (432 aa). Catalysis depends on for beta-ketoacyl synthase activity residues Cys181, His320, and His363. An acyl/malonyl transferase region spans residues 647 to 680; that stretch reads GVSADIIIGHSLGEISSAYCSGMIDFQTLCYLTY. Ser657 acts as the For acyl/malonyl transferase activity in catalysis. Residues 945 to 1067 are N-terminal hotdog fold; it reads GPSIHSLGNN…GNFSLSKHNI (123 aa). The PKS/mFAS DH domain occupies 945–1248; it reads GPSIHSLGNN…CTIVASNPDS (304 aa). His979 acts as the Proton acceptor; for dehydratase activity in catalysis. Positions 1083–1248 are C-terminal hotdog fold; it reads NFTCISKQDL…CTIVASNPDS (166 aa). Asp1155 acts as the Proton donor; for dehydratase activity in catalysis. The tract at residues 1370 to 1408 is disordered; sequence NNNNNNNNNNNNNNNNNNNNNNNNNNNNNNNNNDNDNDN. The Carrier domain maps to 2562 to 2639; it reads NNNEIIRSTI…QSIEIIKSAH (78 aa). Ser2599 carries the post-translational modification O-(pantetheine 4'-phosphoryl)serine. The stretch at 2649–2711 forms a coiled coil; that stretch reads NNNNSNHHDN…NNNNNNNNNN (63 aa). 2 disordered regions span residues 2691–2715 and 2794–2817; these read LNNNNNNNNNNNNNNNNNNNNNNNN and GNISNDKLNSSNSNSDNSNNNNNQ. Composition is skewed to low complexity over residues 2692-2715 and 2795-2817; these read NNNNNNNNNNNNNNNNNNNNNNNN and NISNDKLNSSNSNSDNSNNNNNQ.

It depends on pantetheine 4'-phosphate as a cofactor.

Probable polyketide synthase. In Dictyostelium discoideum (Social amoeba), this protein is Probable polyketide synthase 38 (pks38).